A 370-amino-acid chain; its full sequence is 4-hydroxy-3-methylbut-2-en-1-yl diphosphate synthase (flavodoxin) (370 aa).

[4Fe-4S] cluster is bound by residues cysteine 268, cysteine 271, cysteine 303, and glutamate 310.

Belongs to the IspG family. The cofactor is [4Fe-4S] cluster.

It carries out the reaction (2E)-4-hydroxy-3-methylbut-2-enyl diphosphate + oxidized [flavodoxin] + H2O + 2 H(+) = 2-C-methyl-D-erythritol 2,4-cyclic diphosphate + reduced [flavodoxin]. Its pathway is isoprenoid biosynthesis; isopentenyl diphosphate biosynthesis via DXP pathway; isopentenyl diphosphate from 1-deoxy-D-xylulose 5-phosphate: step 5/6. Its function is as follows. Converts 2C-methyl-D-erythritol 2,4-cyclodiphosphate (ME-2,4cPP) into 1-hydroxy-2-methyl-2-(E)-butenyl 4-diphosphate. The polypeptide is 4-hydroxy-3-methylbut-2-en-1-yl diphosphate synthase (flavodoxin) (Bacillus anthracis (strain A0248)).